The sequence spans 85 residues: Large ribosomal subunit protein eL43 (85 aa).

The segment at 38–59 adopts a C4-type zinc-finger fold; sequence CPVCGRKAVRRISTGIWQCQKC.

Belongs to the eukaryotic ribosomal protein eL43 family. Zn(2+) is required as a cofactor.

The protein is Large ribosomal subunit protein eL43 of Thermococcus sibiricus (strain DSM 12597 / MM 739).